The sequence spans 138 residues: Small ribosomal subunit protein uS11c (138 aa).

The segment at 1–22 (MAKAIPKISSRRNGRIGSRKGA) is disordered. Basic residues predominate over residues 9 to 22 (SSRRNGRIGSRKGA).

This sequence belongs to the universal ribosomal protein uS11 family. As to quaternary structure, part of the 30S ribosomal subunit.

It is found in the plastid. It localises to the chloroplast. The sequence is that of Small ribosomal subunit protein uS11c from Nicotiana tabacum (Common tobacco).